Consider the following 354-residue polypeptide: MGSLEKERTTTGWAARDPSGVLSPYTYSLRNTGPEDLYIKVLSCGICHSDIHQIKNDLGMSHYPMVPGHEVVGEVLEVGSEVTKYRVGDRVGTGIVVGCCRSCSPCNSDQEQYCNKKIWNYNDVYTDGKPTQGGFAGEIVVGERFVVKIPDGLESEQAAPLMCAGVTVYRPLVRFGLKQSGLRGGILGLGGVGHMGVKIAKAMGHHVTVISSSDKKRTEALEHLGADAYLVSSDENGMKEATDSLDYVFDTIPVVHPLEPYLALLKLDGKLILTGVINAPLQFISPMVMLESITGSFIGSMKETEEMLEFCKEKGLTSQIEVIKMDYVNTALERLEKNDVRYRFVVDVVGSKLD.

Residue C47 coordinates Zn(2+). S49 is a binding site for NADP(+). Residues H69, E70, C100, C103, C106, C114, and C163 each contribute to the Zn(2+) site. Residues T167, 188 to 193, 211 to 216, T251, G275, and 296 to 298 contribute to the NADP(+) site; these read GLGGVG, SSSDKK, and SFI.

The protein belongs to the zinc-containing alcohol dehydrogenase family. Homodimer. Zn(2+) serves as cofactor.

It carries out the reaction (E)-cinnamyl alcohol + NADP(+) = (E)-cinnamaldehyde + NADPH + H(+). The enzyme catalyses (E)-coniferol + NADP(+) = (E)-coniferaldehyde + NADPH + H(+). It catalyses the reaction (E)-sinapyl alcohol + NADP(+) = (E)-sinapaldehyde + NADPH + H(+). The catalysed reaction is (E)-4-coumaroyl alcohol + NADP(+) = (E)-4-coumaraldehyde + NADPH + H(+). It carries out the reaction (E)-caffeyl alcohol + NADP(+) = (E)-caffeyl aldehyde + NADPH + H(+). Its pathway is aromatic compound metabolism; phenylpropanoid biosynthesis. Functionally, involved in lignin biosynthesis. Catalyzes the final step specific for the production of lignin monomers. Catalyzes the NADPH-dependent reduction of coniferaldehyde, 5-hydroxyconiferaldehyde, sinapaldehyde, 4-coumaraldehyde and caffeyl aldehyde to their respective alcohols. The chain is Probable cinnamyl alcohol dehydrogenase 1 (CAD1) from Eucalyptus gunnii (Cider gum).